The primary structure comprises 346 residues: Ribonucleoside-diphosphate reductase subunit beta (346 aa).

Residues Glu89, Glu120, and His123 each contribute to the Fe cation site. Residue Tyr129 is part of the active site. Fe cation is bound by residues Glu193, Glu227, and His230.

The protein belongs to the ribonucleoside diphosphate reductase small chain family. Tetramer of two alpha and two beta subunits. Fe cation is required as a cofactor.

It catalyses the reaction a 2'-deoxyribonucleoside 5'-diphosphate + [thioredoxin]-disulfide + H2O = a ribonucleoside 5'-diphosphate + [thioredoxin]-dithiol. In terms of biological role, provides the precursors necessary for DNA synthesis. Catalyzes the biosynthesis of deoxyribonucleotides from the corresponding ribonucleotides. In Chlamydia trachomatis serovar D (strain ATCC VR-885 / DSM 19411 / UW-3/Cx), this protein is Ribonucleoside-diphosphate reductase subunit beta (nrdB).